The chain runs to 256 residues: Large ribosomal subunit protein bL28m (256 aa).

The N-terminal 55 residues, Met-1–Lys-55, are a transit peptide targeting the mitochondrion.

The protein belongs to the bacterial ribosomal protein bL28 family. Component of the mitochondrial large ribosomal subunit (mt-LSU). Mature mammalian 55S mitochondrial ribosomes consist of a small (28S) and a large (39S) subunit. The 28S small subunit contains a 12S ribosomal RNA (12S mt-rRNA) and 30 different proteins. The 39S large subunit contains a 16S rRNA (16S mt-rRNA), a copy of mitochondrial valine transfer RNA (mt-tRNA(Val)), which plays an integral structural role, and 52 different proteins. Interacts with OXA1L. In terms of tissue distribution, found in a variety of normal tissues including spleen, testes, thymus, liver, kidney, brain, adrenal, lung and retinal tissue.

The protein resides in the mitochondrion. The protein is Large ribosomal subunit protein bL28m (MRPL28) of Homo sapiens (Human).